Here is a 271-residue protein sequence, read N- to C-terminus: N-acylmannosamine 1-dehydrogenase (271 aa).

20–44 (VTGAAGGIGRATVEAYLREGASVVA) lines the NAD(+) pocket. S153 contributes to the substrate binding site. The active-site Proton acceptor is the Y166.

Belongs to the short-chain dehydrogenases/reductases (SDR) family.

It carries out the reaction an N-acyl-D-mannosamine + NAD(+) = an N-acyl-D-mannosaminolactone + NADH + H(+). Its function is as follows. Acts on acetyl-D-mannosamine and glycolyl-D-mannosamine. This Flavobacterium sp. (strain 141-8) protein is N-acylmannosamine 1-dehydrogenase.